Reading from the N-terminus, the 185-residue chain is Large ribosomal subunit protein uL5 (185 aa).

Belongs to the universal ribosomal protein uL5 family. In terms of assembly, part of the 50S ribosomal subunit; part of the 5S rRNA/L5/L18/L25 subcomplex. Contacts the 5S rRNA and the P site tRNA. Forms a bridge to the 30S subunit in the 70S ribosome.

In terms of biological role, this is one of the proteins that bind and probably mediate the attachment of the 5S RNA into the large ribosomal subunit, where it forms part of the central protuberance. In the 70S ribosome it contacts protein S13 of the 30S subunit (bridge B1b), connecting the 2 subunits; this bridge is implicated in subunit movement. Contacts the P site tRNA; the 5S rRNA and some of its associated proteins might help stabilize positioning of ribosome-bound tRNAs. The polypeptide is Large ribosomal subunit protein uL5 (Bartonella henselae (strain ATCC 49882 / DSM 28221 / CCUG 30454 / Houston 1) (Rochalimaea henselae)).